A 130-amino-acid polypeptide reads, in one-letter code: Small ribosomal subunit protein uS8 (130 aa).

It belongs to the universal ribosomal protein uS8 family. In terms of assembly, part of the 30S ribosomal subunit.

One of the primary rRNA binding proteins, it binds directly to 16S rRNA central domain where it helps coordinate assembly of the platform of the 30S subunit. This chain is Small ribosomal subunit protein uS8, found in Natronomonas pharaonis (strain ATCC 35678 / DSM 2160 / CIP 103997 / JCM 8858 / NBRC 14720 / NCIMB 2260 / Gabara) (Halobacterium pharaonis).